We begin with the raw amino-acid sequence, 110 residues long: Large ribosomal subunit protein uL22 (110 aa).

It belongs to the universal ribosomal protein uL22 family. In terms of assembly, part of the 50S ribosomal subunit.

This protein binds specifically to 23S rRNA; its binding is stimulated by other ribosomal proteins, e.g. L4, L17, and L20. It is important during the early stages of 50S assembly. It makes multiple contacts with different domains of the 23S rRNA in the assembled 50S subunit and ribosome. Its function is as follows. The globular domain of the protein is located near the polypeptide exit tunnel on the outside of the subunit, while an extended beta-hairpin is found that lines the wall of the exit tunnel in the center of the 70S ribosome. This chain is Large ribosomal subunit protein uL22, found in Methylococcus capsulatus (strain ATCC 33009 / NCIMB 11132 / Bath).